The sequence spans 485 residues: ATP synthase subunit beta (485 aa).

Positions 1–20 (MSTTKTTKMTVKTGSKGTSG) are disordered. Residue 170–177 (GGAGVGKT) participates in ATP binding.

This sequence belongs to the ATPase alpha/beta chains family. As to quaternary structure, F-type ATPases have 2 components, CF(1) - the catalytic core - and CF(0) - the membrane proton channel. CF(1) has five subunits: alpha(3), beta(3), gamma(1), delta(1), epsilon(1). CF(0) has three main subunits: a(1), b(2) and c(9-12). The alpha and beta chains form an alternating ring which encloses part of the gamma chain. CF(1) is attached to CF(0) by a central stalk formed by the gamma and epsilon chains, while a peripheral stalk is formed by the delta and b chains.

It is found in the cell membrane. The catalysed reaction is ATP + H2O + 4 H(+)(in) = ADP + phosphate + 5 H(+)(out). In terms of biological role, produces ATP from ADP in the presence of a proton gradient across the membrane. The catalytic sites are hosted primarily by the beta subunits. This chain is ATP synthase subunit beta, found in Mycobacterium leprae (strain TN).